Here is a 129-residue protein sequence, read N- to C-terminus: Small ribosomal subunit protein uS11 (129 aa).

Residues 108–129 (TPIPHNGTRPPKRVLKRLRLKK) form a disordered region. Residues 117–129 (PPKRVLKRLRLKK) show a composition bias toward basic residues.

It belongs to the universal ribosomal protein uS11 family. Part of the 30S ribosomal subunit. Interacts with proteins S7 and S18. Binds to IF-3.

Its function is as follows. Located on the platform of the 30S subunit, it bridges several disparate RNA helices of the 16S rRNA. Forms part of the Shine-Dalgarno cleft in the 70S ribosome. The polypeptide is Small ribosomal subunit protein uS11 (Mycoplasmopsis synoviae (strain 53) (Mycoplasma synoviae)).